We begin with the raw amino-acid sequence, 541 residues long: Chaperonin GroEL (541 aa).

ATP-binding positions include 29–32, 86–90, Gly-413, 477–479, and Asp-493; these read TLGP, DGTTT, and DAL.

Belongs to the chaperonin (HSP60) family. In terms of assembly, forms a cylinder of 14 subunits composed of two heptameric rings stacked back-to-back. Interacts with the co-chaperonin GroES.

Its subcellular location is the cytoplasm. The enzyme catalyses ATP + H2O + a folded polypeptide = ADP + phosphate + an unfolded polypeptide.. In terms of biological role, together with its co-chaperonin GroES, plays an essential role in assisting protein folding. The GroEL-GroES system forms a nano-cage that allows encapsulation of the non-native substrate proteins and provides a physical environment optimized to promote and accelerate protein folding. This is Chaperonin GroEL from Clostridium botulinum (strain 657 / Type Ba4).